The sequence spans 940 residues: Valine--tRNA ligase (940 aa).

Residues 47 to 57 (PNVTGILHMGH) carry the 'HIGH' region motif. The 'KMSKS' region motif lies at 564-568 (KLSKS). Lysine 567 contributes to the ATP binding site. The stretch at 872-938 (PIEQITKEKN…LQSILDKLAS (67 aa)) forms a coiled coil.

Belongs to the class-I aminoacyl-tRNA synthetase family. ValS type 1 subfamily. Monomer.

Its subcellular location is the cytoplasm. The enzyme catalyses tRNA(Val) + L-valine + ATP = L-valyl-tRNA(Val) + AMP + diphosphate. Functionally, catalyzes the attachment of valine to tRNA(Val). As ValRS can inadvertently accommodate and process structurally similar amino acids such as threonine, to avoid such errors, it has a 'posttransfer' editing activity that hydrolyzes mischarged Thr-tRNA(Val) in a tRNA-dependent manner. This chain is Valine--tRNA ligase, found in Chlamydia felis (strain Fe/C-56) (Chlamydophila felis).